We begin with the raw amino-acid sequence, 479 residues long: Lactaldehyde dehydrogenase (479 aa).

L150 is a binding site for NAD(+). (S)-lactate is bound at residue R161. Residues K176 to E179, Q214, and S230 each bind NAD(+). E251 contributes to the (S)-lactate binding site. Residues E251 and C285 contribute to the active site. (S)-lactate is bound at residue N286. R336 serves as a coordination point for NAD(+). (S)-lactate is bound by residues E443 and H449.

The protein belongs to the aldehyde dehydrogenase family. Homotetramer.

It carries out the reaction (S)-lactaldehyde + NAD(+) + H2O = (S)-lactate + NADH + 2 H(+). The catalysed reaction is glycolaldehyde + NAD(+) + H2O = glycolate + NADH + 2 H(+). The protein operates within carbohydrate degradation; L-fucose degradation. It participates in carbohydrate degradation; L-rhamnose degradation. With respect to regulation, substrate inhibition is very strong with lactaldehyde, diminishing progressively with glycolaldehyde, glyceraldehyde or methylglyoxal. Inhibited by p-hydroxy mercuribenzoate and by some cations, including Mn(2+), Ca(2+), Cu(2+) and Zn(2+). Inhibited by NADH. Its function is as follows. Catalyzes the irreversible oxidation of L-lactaldehyde to L-lactate. Also shows high activity with glycolaldehyde and L-glyceraldehyde. Has weaker activity with various aldehydes such as methylglyoxal, propionaldehyde or benzaldehyde. Involved in the degradation of lactaldehyde produced during metabolism of L-fucose and L-rhamnose. It may be involved in several other metabolic pathways. This is Lactaldehyde dehydrogenase (aldA) from Escherichia coli (strain K12).